We begin with the raw amino-acid sequence, 464 residues long: Chaperone SurA (464 aa).

A signal peptide spans 1-25 (MTRYFSIVLSLLLAVSCVFLPVASA). PpiC domains follow at residues 175 to 277 (GAQY…KLVE) and 292 to 391 (ATEY…QRLG). Positions 439 to 464 (PADDHQTPSAAVIPATGAVLPSATKH) are disordered.

Its subcellular location is the periplasm. It catalyses the reaction [protein]-peptidylproline (omega=180) = [protein]-peptidylproline (omega=0). Chaperone involved in the correct folding and assembly of outer membrane proteins. Recognizes specific patterns of aromatic residues and the orientation of their side chains, which are found more frequently in integral outer membrane proteins. May act in both early periplasmic and late outer membrane-associated steps of protein maturation. The sequence is that of Chaperone SurA from Xylella fastidiosa (strain 9a5c).